A 240-amino-acid chain; its full sequence is Purine nucleoside phosphorylase RP494 (240 aa).

His-60, Cys-96, and His-113 together coordinate Zn(2+).

The protein belongs to the purine nucleoside phosphorylase YfiH/LACC1 family. In terms of assembly, homodimer. Cu(2+) is required as a cofactor. The cofactor is Zn(2+).

The catalysed reaction is adenosine + phosphate = alpha-D-ribose 1-phosphate + adenine. It carries out the reaction S-methyl-5'-thioadenosine + phosphate = 5-(methylsulfanyl)-alpha-D-ribose 1-phosphate + adenine. It catalyses the reaction inosine + phosphate = alpha-D-ribose 1-phosphate + hypoxanthine. The enzyme catalyses adenosine + H2O + H(+) = inosine + NH4(+). Functionally, purine nucleoside enzyme that catalyzes the phosphorolysis of adenosine and inosine nucleosides, yielding D-ribose 1-phosphate and the respective free bases, adenine and hypoxanthine. Also catalyzes the phosphorolysis of S-methyl-5'-thioadenosine into adenine and S-methyl-5-thio-alpha-D-ribose 1-phosphate. Also has adenosine deaminase activity. The polypeptide is Purine nucleoside phosphorylase RP494 (Rickettsia prowazekii (strain Madrid E)).